A 160-amino-acid polypeptide reads, in one-letter code: 2-C-methyl-D-erythritol 2,4-cyclodiphosphate synthase (160 aa).

Residues D11 and H13 each contribute to the a divalent metal cation site. 4-CDP-2-C-methyl-D-erythritol 2-phosphate-binding positions include 11-13 (DIH) and 37-38 (HS). H45 contacts a divalent metal cation. 4-CDP-2-C-methyl-D-erythritol 2-phosphate contacts are provided by residues 59 to 61 (DIG), 135 to 138 (TTNE), and R145.

The protein belongs to the IspF family. In terms of assembly, homotrimer. A divalent metal cation serves as cofactor.

It catalyses the reaction 4-CDP-2-C-methyl-D-erythritol 2-phosphate = 2-C-methyl-D-erythritol 2,4-cyclic diphosphate + CMP. Its pathway is isoprenoid biosynthesis; isopentenyl diphosphate biosynthesis via DXP pathway; isopentenyl diphosphate from 1-deoxy-D-xylulose 5-phosphate: step 4/6. Functionally, involved in the biosynthesis of isopentenyl diphosphate (IPP) and dimethylallyl diphosphate (DMAPP), two major building blocks of isoprenoid compounds. Catalyzes the conversion of 4-diphosphocytidyl-2-C-methyl-D-erythritol 2-phosphate (CDP-ME2P) to 2-C-methyl-D-erythritol 2,4-cyclodiphosphate (ME-CPP) with a corresponding release of cytidine 5-monophosphate (CMP). In Synechococcus elongatus (strain ATCC 33912 / PCC 7942 / FACHB-805) (Anacystis nidulans R2), this protein is 2-C-methyl-D-erythritol 2,4-cyclodiphosphate synthase.